Here is a 62-residue protein sequence, read N- to C-terminus: uncharacterized protein (62 aa).

4Fe-4S ferredoxin-type domains are found at residues 2 to 31 (AVTI…EIEG) and 32 to 62 (DKVV…VEPE). [4Fe-4S] cluster contacts are provided by C10, C15, C18, C22, C42, C45, C48, and C52.

It depends on [4Fe-4S] cluster as a cofactor.

This is an uncharacterized protein from Methanocaldococcus jannaschii (strain ATCC 43067 / DSM 2661 / JAL-1 / JCM 10045 / NBRC 100440) (Methanococcus jannaschii).